Reading from the N-terminus, the 448-residue chain is Exodeoxyribonuclease 7 large subunit (448 aa).

Belongs to the XseA family. In terms of assembly, heterooligomer composed of large and small subunits.

It localises to the cytoplasm. It catalyses the reaction Exonucleolytic cleavage in either 5'- to 3'- or 3'- to 5'-direction to yield nucleoside 5'-phosphates.. Functionally, bidirectionally degrades single-stranded DNA into large acid-insoluble oligonucleotides, which are then degraded further into small acid-soluble oligonucleotides. This chain is Exodeoxyribonuclease 7 large subunit, found in Tolumonas auensis (strain DSM 9187 / NBRC 110442 / TA 4).